The primary structure comprises 433 residues: N-lysine methyltransferase SMYD2 (433 aa).

The region spanning glycine 7–isoleucine 241 is the SET domain. Lysine 17 to arginine 19 serves as a coordination point for S-adenosyl-L-methionine. Zn(2+) contacts are provided by cysteine 52, cysteine 55, cysteine 65, cysteine 68, cysteine 74, cysteine 78, histidine 86, and cysteine 90. Residues cysteine 52–cysteine 90 form an MYND-type zinc finger. Residues histidine 137, asparagine 206–histidine 207, and tyrosine 258–phenylalanine 260 contribute to the S-adenosyl-L-methionine site.

It belongs to the class V-like SAM-binding methyltransferase superfamily. Interacts with RNA polymerase II and HELZ. Interacts with SIN3A and HDAC1. Interacts (via MYND-type zinc finger) with EPB41L3. Interacts (via SET domain) with p53/TP53. Interacts with RB1 and HSP90AA1.

It is found in the cytoplasm. The protein resides in the cytosol. Its subcellular location is the nucleus. The enzyme catalyses L-lysyl(4)-[histone H3] + 3 S-adenosyl-L-methionine = N(6),N(6),N(6)-trimethyl-L-lysyl(4)-[histone H3] + 3 S-adenosyl-L-homocysteine + 3 H(+). The catalysed reaction is L-lysyl-[protein] + S-adenosyl-L-methionine = N(6)-methyl-L-lysyl-[protein] + S-adenosyl-L-homocysteine + H(+). Functionally, protein-lysine N-methyltransferase that methylates both histones and non-histone proteins, including p53/TP53 and RB1. Specifically trimethylates histone H3 'Lys-4' (H3K4me3) in vivo. The activity requires interaction with HSP90alpha. Shows even higher methyltransferase activity on p53/TP53. Monomethylates 'Lys-370' of p53/TP53, leading to decreased DNA-binding activity and subsequent transcriptional regulation activity of p53/TP53. Monomethylates RB1 at 'Lys-860'. This chain is N-lysine methyltransferase SMYD2 (SMYD2), found in Sus scrofa (Pig).